Consider the following 478-residue polypeptide: Calcitonin receptor (478 aa).

Residues 1–22 form the signal peptide; that stretch reads MRFTFTRQFLAFFILISNPASI. The Extracellular segment spans residues 23–146; it reads LPRSENLTFP…FTPEKLQNAY (124 aa). N-linked (GlcNAc...) asparagine glycans are attached at residues Asn28, Asn73, Asn125, and Asn130. 3 cysteine pairs are disulfide-bonded: Cys55-Cys81, Cys72-Cys112, and Cys95-Cys134. The helical transmembrane segment at 147 to 169 threads the bilayer; that stretch reads VLYYLAIVGHSMSIITLVVSLGI. Topologically, residues 170 to 181 are cytoplasmic; the sequence is FVYFRSLGCQRV. Residues 182 to 202 traverse the membrane as a helical segment; it reads TLHKNMFLTYILNSMIIIIHL. The Extracellular portion of the chain corresponds to 203-219; the sequence is VEVVPNGELVRKDPVSC. The cysteines at positions 219 and 289 are disulfide-linked. A helical membrane pass occupies residues 220 to 242; it reads KILHFFHQYMMACNYFWMLCEGI. The Cytoplasmic portion of the chain corresponds to 243–259; sequence YLHTLIVVSVFNEAKHL. Residues 260 to 280 traverse the membrane as a helical segment; it reads RWYYLLGWGFPLVPTTIHAIT. Topologically, residues 281-296 are extracellular; it reads RALYFNDNCWISVDTH. The helical transmembrane segment at 297-320 threads the bilayer; it reads LLYIIHGPVMVALVVNFFFLLNIV. Topologically, residues 321-340 are cytoplasmic; the sequence is RVLVTKMRETHEAESYMYLK. A helical membrane pass occupies residues 341-359; it reads AVKATMILVPLLGIQFVVF. The Extracellular portion of the chain corresponds to 360–367; that stretch reads PWRPSNKV. Residues 368–394 traverse the membrane as a helical segment; that stretch reads LGKIYDYFMHSLIHFQGFFVATIYCFC. Topologically, residues 395–478 are cytoplasmic; it reads NNEVQTTLKR…LNIIEKESSA (84 aa).

The protein belongs to the G-protein coupled receptor 2 family. Heterodimer of CALCR and RAMP1, RAMP2 or RAMP3; the receptor complexes function as AMYR1, AMYR2 and AMYR3 receptors, respectively, and respond to amylin/IAPP, calcitonin/CT and CGRP1 ligands. Interacts with GPRASP2.

Its subcellular location is the cell membrane. Its function is as follows. G protein-coupled receptor activated by ligand peptides amylin (IAPP), calcitonin (CT/CALCA) and calcitonin gene-related peptide type 1 (CGRP1/CALCA). CALCR interacts with receptor-activity-modifying proteins RAMP1, 2 and 3 to form receptor complexes AMYR1, 2 and 3, respectively. IAPP, CT and CGRP1 activate CALCR and AMYRs with distinct modes of receptor activation resulting in specific phenotypes. Ligand binding causes a conformation change that triggers signaling via guanine nucleotide-binding proteins (G proteins) and modulates the activity of downstream effectors. Activates cAMP-dependent pathway. This chain is Calcitonin receptor, found in Cavia porcellus (Guinea pig).